We begin with the raw amino-acid sequence, 156 residues long: Transcription antitermination protein NusB (156 aa).

The protein belongs to the NusB family.

Functionally, involved in transcription antitermination. Required for transcription of ribosomal RNA (rRNA) genes. Binds specifically to the boxA antiterminator sequence of the ribosomal RNA (rrn) operons. In Rickettsia akari (strain Hartford), this protein is Transcription antitermination protein NusB.